The primary structure comprises 65 residues: Ferredoxin soy (65 aa).

A 4Fe-4S ferredoxin-type domain is found at 2–29 (GVQVDKERCVGAGMCALTAPDVFTQDDD). [3Fe-4S] cluster-binding residues include C10, C16, and C55.

It depends on [3Fe-4S] cluster as a cofactor.

Electron transport protein for the cytochrome P-450-SOY system. The chain is Ferredoxin soy (soyB) from Streptomyces griseus.